We begin with the raw amino-acid sequence, 1149 residues long: Tape measure protein (1149 aa).

Transmembrane regions (helical) follow at residues 389 to 409 (VVIFAGMVAALGPLLLIAGMV), 431 to 451 (MGTIAGVIAIFYALVAVFMIA), 561 to 581 (LAFLGITGPLGIAISLLVSFL), 689 to 709 (AAVQIITALFNGLVQALPTLI), 726 to 746 (ALPAIIQAAVQIIMSLVQALI), 781 to 801 (ILMALIEGLIQVLPELITAAI), 840 to 860 (LIAGALQIMMALLKAVIDFVP), and 865 to 885 (AGVQLLKALIQGIASLLGSLL). The segment at 1084–1109 (RVDLFNTGSDNPNQPQSQSKNNQGEQ) is disordered. The segment covering 1094 to 1106 (NPNQPQSQSKNNQ) has biased composition (low complexity).

Its subcellular location is the host membrane. It localises to the virion. Functionally, plays a role in virion tail formation. The length of the tape measure protein is proportional to the length of the phage's tail. The sequence is that of Tape measure protein (TMP) from Streptococcus pneumoniae (Bacteriophage Dp-1).